Consider the following 683-residue polypeptide: DNA ligase (683 aa).

Residues Asp-35–Asp-39, Ser-81–Leu-82, and Glu-112 each bind NAD(+). The active-site N6-AMP-lysine intermediate is the Lys-114. 4 residues coordinate NAD(+): Arg-135, Glu-170, Lys-277, and Lys-301. Residues Cys-395, Cys-398, Cys-411, and Cys-417 each coordinate Zn(2+). Positions Ser-601–Glu-683 constitute a BRCT domain.

Belongs to the NAD-dependent DNA ligase family. LigA subfamily. Requires Mg(2+) as cofactor. Mn(2+) serves as cofactor.

The enzyme catalyses NAD(+) + (deoxyribonucleotide)n-3'-hydroxyl + 5'-phospho-(deoxyribonucleotide)m = (deoxyribonucleotide)n+m + AMP + beta-nicotinamide D-nucleotide.. In terms of biological role, DNA ligase that catalyzes the formation of phosphodiester linkages between 5'-phosphoryl and 3'-hydroxyl groups in double-stranded DNA using NAD as a coenzyme and as the energy source for the reaction. It is essential for DNA replication and repair of damaged DNA. This is DNA ligase from Wolbachia sp. subsp. Brugia malayi (strain TRS).